The chain runs to 343 residues: Putative MO25-like protein At4g17270 (343 aa).

Belongs to the Mo25 family.

In Arabidopsis thaliana (Mouse-ear cress), this protein is Putative MO25-like protein At4g17270.